Reading from the N-terminus, the 579-residue chain is Tyrosine 3-monooxygenase (579 aa).

A compositionally biased stretch (acidic residues) spans 105 to 114; sequence VEFESVEQEQ. The disordered stretch occupies residues 105 to 132; the sequence is VEFESVEQEQSESQSQEPEGNQQPTKND. Residues His409, His414, and Glu454 each coordinate Fe cation.

This sequence belongs to the biopterin-dependent aromatic amino acid hydroxylase family. Fe(2+) serves as cofactor.

It localises to the cytoplasm. Its subcellular location is the perinuclear region. It is found in the cell projection. The protein resides in the axon. The enzyme catalyses (6R)-L-erythro-5,6,7,8-tetrahydrobiopterin + L-tyrosine + O2 = (4aS,6R)-4a-hydroxy-L-erythro-5,6,7,8-tetrahydrobiopterin + L-dopa. It participates in catecholamine biosynthesis; dopamine biosynthesis; dopamine from L-tyrosine: step 1/2. With respect to regulation, phosphorylation leads to an increase in the catalytic activity. In terms of biological role, plays an important role in the physiology of adrenergic neurons. The sequence is that of Tyrosine 3-monooxygenase (ple) from Drosophila melanogaster (Fruit fly).